A 284-amino-acid chain; its full sequence is Avenin-like b3 (284 aa).

Residues 1-18 (MKVFILALLALTATTAIA) form the signal peptide.

Belongs to the prolamin family. Contains disulfide bonds.

Functionally, seed storage protein. Might be integrated via inter-chain disulfide bonds within the glutenin polymer. This chain is Avenin-like b3, found in Triticum aestivum (Wheat).